We begin with the raw amino-acid sequence, 807 residues long: FAD-linked oxidoreductase pytB (807 aa).

The first 18 residues, 1 to 18, serve as a signal peptide directing secretion; sequence MRFLGIAAVATFSTVVSA. Residues Asn45, Asn106, Asn120, Asn242, Asn295, Asn351, Asn419, and Asn699 are each glycosylated (N-linked (GlcNAc...) asparagine). One can recognise an FAD-binding PCMH-type domain in the interval 60 to 231; sequence FDELPVLLAY…VEFTLSLTSI (172 aa).

This sequence belongs to the oxygen-dependent FAD-linked oxidoreductase family. Requires FAD as cofactor.

The protein operates within secondary metabolite biosynthesis. Its function is as follows. FAD-linked oxidoreductase; part of the gene cluster that mediates the biosynthesis of pyranterreones, a family of antioxidative compounds. The first step of pyranonigrins biosynthesis is performed by the hybrid PKS-NRPS synthetase pytA that condenses 4 malonyl-CoA units ato the acetyl starter unit by the modular PKS of pytA. The acyl chain is then connected to an L-serine through the amide bond by the modular NRPS of pytA. A tetramic acid is formed and released from the PKS-NRPS pytA to give pyranterreone 5 with the help of the thioesterase pytI. Pyranterreone 5 could be methylated by pytC to afford pyranterreone 6. Both pyranterreones 5 and 6 are subsequently oxidized by the FAD-linked oxidoreductase pytB and the cytochrome P450 monooxygenase pytD to form the fused gamma-pyrone core, resulting in pyranterreones 7 and 11, respectively. The hydroxy group at C-8 of pyranterreones 7 and 11 are dehydrated by the aspartyl protease pytH to form a delta-7 double bond to give pyranterreones 3 and 1, 2 accordingly. The exo-methylene of pyranterreone 3 could be reduced into a pendant methyl by reductase pytE to provide pyranterreone 4, also known as cordylactam. Pyranterreone 4 can be reconverted to pyranterreone 3 through pytB-catalyzed dehydrogenation or further oxidized to pyranterreones 9 and 10. The protein is FAD-linked oxidoreductase pytB of Aspergillus terreus (strain NIH 2624 / FGSC A1156).